The sequence spans 165 residues: UBA-like domain-containing protein 2-B (165 aa).

The interval 119–165 (QQPVWLPPASPTAHLHHHHHHPQPVWPPNSQPTGGPQKAMAAMDGQR) is disordered.

The protein belongs to the UBALD family.

The chain is UBA-like domain-containing protein 2-B (ubald2-b) from Xenopus laevis (African clawed frog).